A 300-amino-acid chain; its full sequence is Probable alpha-L-glutamate ligase (300 aa).

Residues 104 to 287 (LQLLARQGID…IAGKMISWIE (184 aa)) enclose the ATP-grasp domain. ATP contacts are provided by residues Lys-141, 178 to 179 (EY), Asp-187, and 211 to 213 (RSN). Positions 248, 260, and 262 each coordinate Mg(2+). Residues Asp-248, Glu-260, and Asn-262 each coordinate Mn(2+).

The protein belongs to the RimK family. Requires Mg(2+) as cofactor. Mn(2+) is required as a cofactor.

This chain is Probable alpha-L-glutamate ligase, found in Enterobacter sp. (strain 638).